The sequence spans 168 residues: MATTITMQSSTILGNFILVTASFAVLIILIRVFAWDKITGIFEERANKIANDIDAAEEKLTAAANLVQQREDELVQGRIESQKIIQDAVERAKLEKKRILEQADVEIQGLKQKAQLEIEAEKREAQENLRVQVAELAVDLASKIILEDLDQQAHSNLIDRYLDKLGDK.

The chain crosses the membrane as a helical span at residues 10–30 (STILGNFILVTASFAVLIILI).

It belongs to the ATPase B chain family. As to quaternary structure, F-type ATPases have 2 components, F(1) - the catalytic core - and F(0) - the membrane proton channel. F(1) has five subunits: alpha(3), beta(3), gamma(1), delta(1), epsilon(1). F(0) has three main subunits: a(1), b(2) and c(10-14). The alpha and beta chains form an alternating ring which encloses part of the gamma chain. F(1) is attached to F(0) by a central stalk formed by the gamma and epsilon chains, while a peripheral stalk is formed by the delta and b chains.

The protein resides in the cell membrane. Its function is as follows. F(1)F(0) ATP synthase produces ATP from ADP in the presence of a proton or sodium gradient. F-type ATPases consist of two structural domains, F(1) containing the extramembraneous catalytic core and F(0) containing the membrane proton channel, linked together by a central stalk and a peripheral stalk. During catalysis, ATP synthesis in the catalytic domain of F(1) is coupled via a rotary mechanism of the central stalk subunits to proton translocation. Component of the F(0) channel, it forms part of the peripheral stalk, linking F(1) to F(0). The protein is ATP synthase subunit b of Streptococcus suis (strain 98HAH33).